The primary structure comprises 483 residues: Glutamyl-tRNA(Gln) amidotransferase subunit A (483 aa).

Residues K76 and S151 each act as charge relay system in the active site. S175 (acyl-ester intermediate) is an active-site residue.

Belongs to the amidase family. GatA subfamily. In terms of assembly, heterotrimer of A, B and C subunits.

It carries out the reaction L-glutamyl-tRNA(Gln) + L-glutamine + ATP + H2O = L-glutaminyl-tRNA(Gln) + L-glutamate + ADP + phosphate + H(+). Functionally, allows the formation of correctly charged Gln-tRNA(Gln) through the transamidation of misacylated Glu-tRNA(Gln) in organisms which lack glutaminyl-tRNA synthetase. The reaction takes place in the presence of glutamine and ATP through an activated gamma-phospho-Glu-tRNA(Gln). This Pseudomonas putida (strain GB-1) protein is Glutamyl-tRNA(Gln) amidotransferase subunit A.